A 451-amino-acid polypeptide reads, in one-letter code: Tubulin alpha-2 chain (451 aa).

Glutamine 11 provides a ligand contact to GTP. At lysine 40 the chain carries N6-acetyllysine. GTP is bound by residues glutamate 71, glycine 144, threonine 145, threonine 179, asparagine 206, and asparagine 228. Residue glutamate 71 participates in Mg(2+) binding. Glutamate 254 is a catalytic residue.

Belongs to the tubulin family. In terms of assembly, dimer of alpha and beta chains. A typical microtubule is a hollow water-filled tube with an outer diameter of 25 nm and an inner diameter of 15 nM. Alpha-beta heterodimers associate head-to-tail to form protofilaments running lengthwise along the microtubule wall with the beta-tubulin subunit facing the microtubule plus end conferring a structural polarity. Microtubules usually have 13 protofilaments but different protofilament numbers can be found in some organisms and specialized cells. Mg(2+) serves as cofactor. Post-translationally, undergoes a tyrosination/detyrosination cycle, the cyclic removal and re-addition of a C-terminal tyrosine residue by the enzymes tubulin tyrosine carboxypeptidase (TTCP) and tubulin tyrosine ligase (TTL), respectively. In terms of processing, acetylation of alpha chains at Lys-40 stabilizes microtubules and affects affinity and processivity of microtubule motors. This modification has a role in multiple cellular functions, ranging from cell motility, cell cycle progression or cell differentiation to intracellular trafficking and signaling.

Its subcellular location is the cytoplasm. It is found in the cytoskeleton. It carries out the reaction GTP + H2O = GDP + phosphate + H(+). In terms of biological role, tubulin is the major constituent of microtubules, a cylinder consisting of laterally associated linear protofilaments composed of alpha- and beta-tubulin heterodimers. Microtubules grow by the addition of GTP-tubulin dimers to the microtubule end, where a stabilizing cap forms. Below the cap, tubulin dimers are in GDP-bound state, owing to GTPase activity of alpha-tubulin. The chain is Tubulin alpha-2 chain (TUBA) from Oryza sativa subsp. japonica (Rice).